Consider the following 151-residue polypeptide: Large ribosomal subunit protein uL15 (151 aa).

The segment at 1–60 (MAENNPLKIHNLRPAPGAKTAKTRVGRGEASKGKTAGRGTKGTKARYQVPERFEGGQMPL) is disordered.

The protein belongs to the universal ribosomal protein uL15 family. Part of the 50S ribosomal subunit.

Its function is as follows. Binds to the 23S rRNA. The sequence is that of Large ribosomal subunit protein uL15 from Streptomyces avermitilis (strain ATCC 31267 / DSM 46492 / JCM 5070 / NBRC 14893 / NCIMB 12804 / NRRL 8165 / MA-4680).